The following is a 1138-amino-acid chain: uncharacterized protein (1138 aa).

A signal peptide spans 1 to 28 (MKLFPRSILIILVLSFALNLGLVTKTHA). A run of 7 helical transmembrane segments spans residues 331 to 351 (IVTA…LLAG), 359 to 379 (YINF…INIT), 392 to 412 (MIQW…SWVM), 494 to 514 (MLVS…AFMV), 520 to 540 (CMIS…MFLF), 554 to 574 (MISF…MFSV), and 699 to 719 (IKNI…MYNF). A compositionally biased stretch (gly residues) spans 775–784 (DLKAGQGGGV). Disordered regions lie at residues 775–914 (DLKA…KGTG), 958–977 (GGGR…RTNA), and 995–1071 (ERDN…KQIR). The segment covering 801 to 830 (AASGGTSAPTVTTPTASSSVATSSPKTVSS) has biased composition (low complexity). A compositionally biased stretch (pro residues) spans 838–852 (TPPPAPSEAVSPPPA). A compositionally biased stretch (polar residues) spans 854 to 869 (IRTSISTPAPQSNIET). Composition is skewed to basic and acidic residues over residues 875-888 (IIRD…KEID), 961-977 (RIRD…RTNA), 995-1032 (ERDN…RKEN), and 1058-1071 (LKEH…KQIR).

Belongs to the TrbL/VirB6 family.

The protein localises to the cell membrane. This is an uncharacterized protein from Rickettsia felis (strain ATCC VR-1525 / URRWXCal2) (Rickettsia azadi).